The chain runs to 460 residues: Argininosuccinate lyase (460 aa).

It belongs to the lyase 1 family. Argininosuccinate lyase subfamily.

The protein localises to the cytoplasm. It catalyses the reaction 2-(N(omega)-L-arginino)succinate = fumarate + L-arginine. The protein operates within amino-acid biosynthesis; L-arginine biosynthesis; L-arginine from L-ornithine and carbamoyl phosphate: step 3/3. The chain is Argininosuccinate lyase from Rhodopirellula baltica (strain DSM 10527 / NCIMB 13988 / SH1).